A 76-amino-acid chain; its full sequence is Small ribosomal subunit protein bS18 (76 aa).

It belongs to the bacterial ribosomal protein bS18 family. Part of the 30S ribosomal subunit. Forms a tight heterodimer with protein bS6.

Binds as a heterodimer with protein bS6 to the central domain of the 16S rRNA, where it helps stabilize the platform of the 30S subunit. This is Small ribosomal subunit protein bS18 from Alcanivorax borkumensis (strain ATCC 700651 / DSM 11573 / NCIMB 13689 / SK2).